The following is a 616-amino-acid chain: Chaperone protein HscA (616 aa).

The protein belongs to the heat shock protein 70 family.

Chaperone involved in the maturation of iron-sulfur cluster-containing proteins. Has a low intrinsic ATPase activity which is markedly stimulated by HscB. Involved in the maturation of IscU. The polypeptide is Chaperone protein HscA (Cronobacter sakazakii (strain ATCC BAA-894) (Enterobacter sakazakii)).